Consider the following 35-residue polypeptide: Dolichyl-diphosphooligosaccharide--protein glycosyltransferase subunit 4B (35 aa).

Over 1–8 the chain is Lumenal; the sequence is MFDDQDLG. A helical transmembrane segment spans residues 9-29; the sequence is FFANFLGIFIFIMVIAYHFVV. Residues 30 to 35 lie on the Cytoplasmic side of the membrane; it reads AEPKFE.

It belongs to the OST4 family. Component of the oligosaccharyltransferase (OST) complex.

The protein resides in the endoplasmic reticulum membrane. Its function is as follows. Subunit of the oligosaccharyl transferase (OST) complex that catalyzes the initial transfer of a defined glycan (Glc(3)Man(9)GlcNAc(2) in eukaryotes) from the lipid carrier dolichol-pyrophosphate to an asparagine residue within an Asn-X-Ser/Thr consensus motif in nascent polypeptide chains, the first step in protein N-glycosylation. N-glycosylation occurs cotranslationally and the complex associates with the Sec61 complex at the channel-forming translocon complex that mediates protein translocation across the endoplasmic reticulum (ER). All subunits are required for a maximal enzyme activity. This Arabidopsis thaliana (Mouse-ear cress) protein is Dolichyl-diphosphooligosaccharide--protein glycosyltransferase subunit 4B (OST4B).